A 596-amino-acid chain; its full sequence is V-type ATP synthase alpha chain (596 aa).

Residue 233 to 240 (GPFGAGKT) participates in ATP binding.

Belongs to the ATPase alpha/beta chains family.

It carries out the reaction ATP + H2O + 4 H(+)(in) = ADP + phosphate + 5 H(+)(out). Its function is as follows. Produces ATP from ADP in the presence of a proton gradient across the membrane. The V-type alpha chain is a catalytic subunit. In Streptococcus sanguinis (strain SK36), this protein is V-type ATP synthase alpha chain.